A 387-amino-acid polypeptide reads, in one-letter code: Penicillopepsin-1 (387 aa).

An N-terminal signal peptide occupies residues 1–19 (MVNSKTVVSALALSALAAA). A propeptide spans 20-66 (APAPSSTTSFSINQVAVKKPAIHPAVKYAKALAKYHAEIPSNVASAA) (activation peptide). A Peptidase A1 domain is found at 85-384 (YVTPITAGSS…DGDNLQLGFA (300 aa)). Residues D101 and D279 contribute to the active site. An N-linked (GlcNAc...) asparagine glycan is attached at N304. A disulfide bridge connects residues C315 and C347.

This sequence belongs to the peptidase A1 family. In terms of assembly, monomer.

The protein localises to the secreted. It carries out the reaction Hydrolysis of proteins with broad specificity similar to that of pepsin A, preferring hydrophobic residues at P1 and P1', but also cleaving 20-Gly-|-Glu-21 in the B chain of insulin. Clots milk, and activates trypsinogen.. Its function is as follows. Secreted aspartic endopeptidase that allows assimilation of proteinaceous substrates. The scissile peptide bond is attacked by a nucleophilic water molecule activated by two aspartic residues in the active site. Shows a broad primary substrate specificity. Favors hydrophobic residues at the P1 and P1' positions, but can also activate trypsinogen and hydrolyze the B chain of insulin between positions 'Gly-20' and 'Glu-21'. This chain is Penicillopepsin-1 (pepA), found in Talaromyces stipitatus (strain ATCC 10500 / CBS 375.48 / QM 6759 / NRRL 1006) (Penicillium stipitatum).